The primary structure comprises 129 residues: Glycine cleavage system H protein (129 aa).

The Lipoyl-binding domain maps to 24–106; the sequence is TYTVGITEHA…YGQGWIFKIK (83 aa). Lys-65 carries the N6-lipoyllysine modification.

It belongs to the GcvH family. In terms of assembly, the glycine cleavage system is composed of four proteins: P, T, L and H. (R)-lipoate is required as a cofactor.

Functionally, the glycine cleavage system catalyzes the degradation of glycine. The H protein shuttles the methylamine group of glycine from the P protein to the T protein. In Cronobacter sakazakii (strain ATCC BAA-894) (Enterobacter sakazakii), this protein is Glycine cleavage system H protein.